The sequence spans 490 residues: Aspartyl/glutamyl-tRNA(Asn/Gln) amidotransferase subunit B (490 aa).

It belongs to the GatB/GatE family. GatB subfamily. In terms of assembly, heterotrimer of A, B and C subunits.

The enzyme catalyses L-glutamyl-tRNA(Gln) + L-glutamine + ATP + H2O = L-glutaminyl-tRNA(Gln) + L-glutamate + ADP + phosphate + H(+). It carries out the reaction L-aspartyl-tRNA(Asn) + L-glutamine + ATP + H2O = L-asparaginyl-tRNA(Asn) + L-glutamate + ADP + phosphate + 2 H(+). Functionally, allows the formation of correctly charged Asn-tRNA(Asn) or Gln-tRNA(Gln) through the transamidation of misacylated Asp-tRNA(Asn) or Glu-tRNA(Gln) in organisms which lack either or both of asparaginyl-tRNA or glutaminyl-tRNA synthetases. The reaction takes place in the presence of glutamine and ATP through an activated phospho-Asp-tRNA(Asn) or phospho-Glu-tRNA(Gln). This is Aspartyl/glutamyl-tRNA(Asn/Gln) amidotransferase subunit B from Methylobacterium nodulans (strain LMG 21967 / CNCM I-2342 / ORS 2060).